A 30-amino-acid chain; its full sequence is GIPCAESCVYIPCTITALLGCKCKDQVCYN.

A cross-link (cyclopeptide (Gly-Asn)) is located at residues 1-30; it reads GIPCAESCVYIPCTITALLGCKCKDQVCYN. Disulfide bonds link C4–C21, C8–C23, and C13–C28.

In terms of processing, this is a cyclic peptide.

Probably participates in a plant defense mechanism. This chain is Kalata-B17, found in Oldenlandia affinis.